Here is a 565-residue protein sequence, read N- to C-terminus: Pentatricopeptide repeat-containing protein At3g20730 (565 aa).

PPR repeat units follow at residues Ser12–Ser46, Asn47–Arg77, Asp78–Ala112, Asn113–Gly147, Asn148–Arg178, Asp179–Pro213, Asp214–Arg248, Ser249–Arg279, Asp280–Met315, Asp316–Phe351, Asp352–Lys382, Asp383–Pro417, Asn418–Lys448, and Arg454–Ile484. The interval Thr491 to Tyr565 is type E motif; degenerate.

It belongs to the PPR family. PCMP-E subfamily.

This Arabidopsis thaliana (Mouse-ear cress) protein is Pentatricopeptide repeat-containing protein At3g20730 (PCMP-E94).